The primary structure comprises 204 residues: Glycerol-3-phosphate acyltransferase (204 aa).

The next 5 helical transmembrane spans lie at 6 to 26 (YIII…YIVA), 80 to 100 (LVGI…VAGH), 122 to 142 (LAVN…VVAI), 144 to 164 (KYVS…MIMV), and 168 to 188 (AGLI…RANI).

It belongs to the PlsY family. Probably interacts with PlsX.

The protein localises to the cell membrane. It catalyses the reaction an acyl phosphate + sn-glycerol 3-phosphate = a 1-acyl-sn-glycero-3-phosphate + phosphate. Its pathway is lipid metabolism; phospholipid metabolism. Functionally, catalyzes the transfer of an acyl group from acyl-phosphate (acyl-PO(4)) to glycerol-3-phosphate (G3P) to form lysophosphatidic acid (LPA). This enzyme utilizes acyl-phosphate as fatty acyl donor, but not acyl-CoA or acyl-ACP. The chain is Glycerol-3-phosphate acyltransferase from Clostridioides difficile (strain 630) (Peptoclostridium difficile).